Reading from the N-terminus, the 139-residue chain is Actin-depolymerizing factor 2 (139 aa).

Residues 7–139 (GLAVSDECKV…SLDIVKSRTN (133 aa)) form the ADF-H domain.

Belongs to the actin-binding proteins ADF family. Expressed in pollen.

Functionally, actin-depolymerizing protein. Severs actin filaments (F-actin) and binds to actin monomers. This chain is Actin-depolymerizing factor 2 (ADF2), found in Zea mays (Maize).